We begin with the raw amino-acid sequence, 20 residues long: SIPLPSLNFEQFGNMIQCTI.

The protein belongs to the phospholipase A2 family. Group I subfamily. Heterotrimer of alpha, beta and gamma chains, each related to PLA2. Glycosylated. As to expression, expressed by the venom gland.

It is found in the secreted. In terms of biological role, heterotrimer: Snake venom phospholipase A2 (PLA2) that has presynaptic neurotoxicity. Inhibits nerve-evoked twitch contractions but not responses to cholinergic agonists acetylcholine and carbachol and to depolarizing agonist KCl. Causes a fade in tetanic contractions. Displays a triphasic mode of action with depression, enhancement and blockade of neurotransmission. Does not display myotoxic activity such as changes in baseline muscle tension or inhibition of directly stimulated muscle twitches. All subunits are necessary for maximum toxicity. Its function is as follows. Monomer: the gamma chain has no significant enzymatic activity and is not toxic by itself. The polypeptide is Phospholipase A2 homolog P-elapitoxin-Aa1a gamma chain (Acanthophis antarcticus (Common death adder)).